A 342-amino-acid chain; its full sequence is tRNA N6-adenosine threonylcarbamoyltransferase (342 aa).

The Fe cation site is built by His111 and His115. Substrate contacts are provided by residues 134-138 (LVSGG), Asp167, Gly180, and Asn277. Asp305 provides a ligand contact to Fe cation.

The protein belongs to the KAE1 / TsaD family. Fe(2+) serves as cofactor.

It is found in the cytoplasm. It catalyses the reaction L-threonylcarbamoyladenylate + adenosine(37) in tRNA = N(6)-L-threonylcarbamoyladenosine(37) in tRNA + AMP + H(+). Required for the formation of a threonylcarbamoyl group on adenosine at position 37 (t(6)A37) in tRNAs that read codons beginning with adenine. Is involved in the transfer of the threonylcarbamoyl moiety of threonylcarbamoyl-AMP (TC-AMP) to the N6 group of A37, together with TsaE and TsaB. TsaD likely plays a direct catalytic role in this reaction. This is tRNA N6-adenosine threonylcarbamoyltransferase from Cellvibrio japonicus (strain Ueda107) (Pseudomonas fluorescens subsp. cellulosa).